The chain runs to 729 residues: Polyribonucleotide nucleotidyltransferase (729 aa).

2 residues coordinate Mg(2+): aspartate 485 and aspartate 491. One can recognise a KH domain in the interval 552–611 (PRITTMKVAEDKIRTIIGKGGATIKGLIESTGVSIDIDDSGVIQLFSPDKMALEEAQKQI). The region spanning 621 to 689 (GQTYQGKVSK…KQGRVKLEWK (69 aa)) is the S1 motif domain. Positions 710-729 (TMEEQSEEINSGNKISEEEE) are disordered.

This sequence belongs to the polyribonucleotide nucleotidyltransferase family. As to quaternary structure, component of the RNA degradosome, which is a multiprotein complex involved in RNA processing and mRNA degradation. The cofactor is Mg(2+).

Its subcellular location is the cytoplasm. The catalysed reaction is RNA(n+1) + phosphate = RNA(n) + a ribonucleoside 5'-diphosphate. Its function is as follows. Involved in mRNA degradation. Catalyzes the phosphorolysis of single-stranded polyribonucleotides processively in the 3'- to 5'-direction. This is Polyribonucleotide nucleotidyltransferase from Legionella pneumophila (strain Paris).